The chain runs to 533 residues: Beta-1,4 N-acetylgalactosaminyltransferase 1 (533 aa).

Over 1–7 the chain is Cytoplasmic; the sequence is MRLDRRA. The chain crosses the membrane as a helical; Signal-anchor for type II membrane protein span at residues 8–25; the sequence is LYALVLLLACASLGLLYS. At 26-533 the chain is on the lumenal side; sequence STRNAPSLPN…KHRLQCMTAE (508 aa). Asn-79, Asn-179, and Asn-274 each carry an N-linked (GlcNAc...) asparagine glycan. A disulfide bond links Cys-429 and Cys-476.

Belongs to the glycosyltransferase 2 family. As to quaternary structure, homodimer; disulfide-linked. As to expression, most abundant in brain, liver, lung, spleen and testis.

The protein resides in the golgi apparatus membrane. The enzyme catalyses a ganglioside GM3 (d18:1(4E)) + UDP-N-acetyl-alpha-D-galactosamine = a ganglioside GM2 (d18:1(4E)) + UDP + H(+). The catalysed reaction is a ganglioside GD3 (d18:1(4E)) + UDP-N-acetyl-alpha-D-galactosamine = a ganglioside GD2 (d18:1(4E)) + UDP + H(+). It catalyses the reaction a ganglioside GM3 + UDP-N-acetyl-alpha-D-galactosamine = a ganglioside GM2 + UDP + H(+). It carries out the reaction a ganglioside GD3 + UDP-N-acetyl-alpha-D-galactosamine = a ganglioside GD2 + UDP + H(+). The enzyme catalyses a ganglioside GD1a + UDP-N-acetyl-alpha-D-galactosamine = a ganglioside GalNAc-GD1a + UDP + H(+). The catalysed reaction is a ganglioside GT3 (d18:1(4E)) + UDP-N-acetyl-alpha-D-galactosamine = a ganglioside GT2 (d18:1(4E)) + UDP + H(+). It catalyses the reaction a beta-D-Gal-(1-&gt;4)-beta-D-Glc-(1&lt;-&gt;1)-Cer(d18:1(4E)) + UDP-N-acetyl-alpha-D-galactosamine = a ganglioside GA2 (d18:1(4E)) + UDP + H(+). It carries out the reaction a neolactoside IV(3)-alpha-NeuGc-nLc4Cer + UDP-N-acetyl-alpha-D-galactosamine = a neolactoside IV(4)-beta-GalNAc-IV(3)-alpha-NeuGc-nLc4Cer + UDP + H(+). Its pathway is sphingolipid metabolism. In terms of biological role, involved in the biosynthesis of gangliosides GM2, GD2 and GA2. Its function is as follows. Involved in the biosynthesis of gangliosides GM2, GD2, GT2 and GA2 from GM3, GD3, GT3 and GA3, respectively. The polypeptide is Beta-1,4 N-acetylgalactosaminyltransferase 1 (Mus musculus (Mouse)).